The chain runs to 153 residues: uncharacterized protein (153 aa).

A run of 2 helical transmembrane segments spans residues Ile16–Ile36 and Ala97–Cys117.

The protein localises to the membrane. This is an uncharacterized protein from Human herpesvirus 6A (strain Uganda-1102) (HHV-6 variant A).